The following is a 185-amino-acid chain: ATP-dependent protease subunit HslV (185 aa).

The active site involves T12. Na(+) is bound by residues A168, C171, and T174.

This sequence belongs to the peptidase T1B family. HslV subfamily. A double ring-shaped homohexamer of HslV is capped on each side by a ring-shaped HslU homohexamer. The assembly of the HslU/HslV complex is dependent on binding of ATP.

Its subcellular location is the cytoplasm. It carries out the reaction ATP-dependent cleavage of peptide bonds with broad specificity.. With respect to regulation, allosterically activated by HslU binding. Functionally, protease subunit of a proteasome-like degradation complex believed to be a general protein degrading machinery. This Cereibacter sphaeroides (strain ATCC 17023 / DSM 158 / JCM 6121 / CCUG 31486 / LMG 2827 / NBRC 12203 / NCIMB 8253 / ATH 2.4.1.) (Rhodobacter sphaeroides) protein is ATP-dependent protease subunit HslV.